The primary structure comprises 552 residues: Steroid transmembrane transporter SLC22A24 (552 aa).

12 helical membrane-spanning segments follow: residues 16-36, 146-166, 178-200, 204-226, 234-254, 260-280, 350-370, 380-400, 407-427, 435-455, 474-492, and 496-516; these read FQIC…PNIV, SMVQ…YGHL, LCFL…LVYC, FLAG…EWTL, IMVL…LAFA, ILQL…WKMV, VFGL…LILN, LFQI…LLTL, ISQI…TFLP, VVLA…ASVH, VSGR…LMAY, and LPWI…LLLP.

The protein belongs to the major facilitator (TC 2.A.1) superfamily. Organic cation transporter (TC 2.A.1.19) family. In terms of tissue distribution, localized to the kidney. Highly specific expression pattern in the nephron, localized to segment 3 of the proximal tubule.

Its subcellular location is the cell membrane. The enzyme catalyses estrone 3-sulfate(out) + glutarate(in) = estrone 3-sulfate(in) + glutarate(out). The catalysed reaction is 17beta-estradiol 17-O-(beta-D-glucuronate)(out) + glutarate(in) = 17beta-estradiol 17-O-(beta-D-glucuronate)(in) + glutarate(out). It catalyses the reaction taurocholate(out) + glutarate(in) = taurocholate(in) + glutarate(out). It carries out the reaction 5alpha-androstane-3alpha,17beta-diol 3-O-(beta-D-glucuronate)(out) + glutarate(in) = 5alpha-androstane-3alpha,17beta-diol 3-O-(beta-D-glucuronate)(in) + glutarate(out). The enzyme catalyses glycocholate(out) + glutarate(in) = glycocholate(in) + glutarate(out). The catalysed reaction is dehydroepiandrosterone 3-sulfate(out) + glutarate(in) = dehydroepiandrosterone 3-sulfate(in) + glutarate(out). It catalyses the reaction glutarate(in) + succinate(out) = glutarate(out) + succinate(in). Transport is chloride sensitive and transtimulated by glutaric acid. Transport is inhibited by anionic compounds from different chemical classes. Renal transmembrane organic anion/dicarboxylate exchanger that participates in the reabsorption of conjugated steroids including estradiol-17beta-D-glucuronide (or 17beta-estradiol 17-O-(beta-D-glucuronate)), androstanediol glucuronide (or 5alpha-androstane-3alpha,17beta-diol 3-O-(beta-D-glucuronate)), and estrone 3-sulfate, as well as bile acids taurocholate and glycocholate, driven by an outward gradient of dicarboxylates such as glutarate or succinate. Functionally, similar uptake function as Isoform 1. In terms of biological role, lack of transporter activity. The polypeptide is Steroid transmembrane transporter SLC22A24 (Homo sapiens (Human)).